Consider the following 161-residue polypeptide: Cytochrome c-type biogenesis protein CcmE (161 aa).

Over 1–13 (MSWLPKSPKARRR) the chain is Cytoplasmic. The helical; Signal-anchor for type II membrane protein transmembrane segment at 14–34 (LMLVAAIAPVLAVAAGLTLWG) threads the bilayer. The Periplasmic portion of the chain corresponds to 35–161 (LSDSISFFYT…QRPEHQGDAL (127 aa)). Histidine 128 and tyrosine 132 together coordinate heme.

It belongs to the CcmE/CycJ family.

It localises to the cell inner membrane. Heme chaperone required for the biogenesis of c-type cytochromes. Transiently binds heme delivered by CcmC and transfers the heme to apo-cytochromes in a process facilitated by CcmF and CcmH. This Phenylobacterium zucineum (strain HLK1) protein is Cytochrome c-type biogenesis protein CcmE.